The sequence spans 251 residues: Regulator of G-protein signaling 9-binding protein C (251 aa).

The Cytoplasmic segment spans residues 1–230 (MPLQNVKVAD…NSKGCCSDGQ (230 aa)). Coiled coils occupy residues 53–94 (LRDE…ELER) and 158–187 (ANKA…MKVN). The chain crosses the membrane as a helical; Anchor for type IV membrane protein span at residues 231–250 (LIVSLLLCGTALVAITLYSI). Leucine 251 is a topological domain (extracellular).

It belongs to the RGS7BP/RGS9BP family.

The protein resides in the membrane. Functionally, regulator of G protein-coupled receptor (GPCR) signaling. Probably acts by regulating the activity of some 'R7' family protein (RGS6, RGS7, RGS9 and/or RGS11). This chain is Regulator of G-protein signaling 9-binding protein C (rgs9bp-c), found in Xenopus laevis (African clawed frog).